Consider the following 344-residue polypeptide: MTARGGRAPLARRAMVYGVVGLAAIAGVAMWSGASWHRGTGAASDSPDAPVAGGLAAAPPQAAVPASAGLPPSLAGSSAPRLPLDAGGHLAKSRAVRDFFDYCLTAQSDLSAAALDAFVVREIAAQLDGTVAQVEALDVWHRYRAYLDALAKLRDAGAVDKSDLGALQLALDQRASIAYRTLGDWSQPFFGAEQWRQRYDLARLKITRDPTLTDAQKAERLAALEQQMPADERAAQKRIDKQRAAIDQIAQLQKSGATPDAMRAQLTQTLGPEAAARVAQMQQDDASWQSRYTDYAAQRAQIESAGLSPQDRDAQITALRQRVFTKPGEAVRAASLDRGAGSAR.

A helical membrane pass occupies residues 14–34 (AMVYGVVGLAAIAGVAMWSGA).

Belongs to the lipase chaperone family.

Its subcellular location is the cell inner membrane. May be involved in the folding of the extracellular lipase during its passage through the periplasm. The polypeptide is Lipase chaperone (Burkholderia lata (strain ATCC 17760 / DSM 23089 / LMG 22485 / NCIMB 9086 / R18194 / 383)).